Reading from the N-terminus, the 218-residue chain is Protein-L-isoaspartate O-methyltransferase (218 aa).

The active site involves S69.

Belongs to the methyltransferase superfamily. L-isoaspartyl/D-aspartyl protein methyltransferase family.

It is found in the cytoplasm. It catalyses the reaction [protein]-L-isoaspartate + S-adenosyl-L-methionine = [protein]-L-isoaspartate alpha-methyl ester + S-adenosyl-L-homocysteine. Functionally, catalyzes the methyl esterification of L-isoaspartyl residues in peptides and proteins that result from spontaneous decomposition of normal L-aspartyl and L-asparaginyl residues. It plays a role in the repair and/or degradation of damaged proteins. The polypeptide is Protein-L-isoaspartate O-methyltransferase (Aromatoleum aromaticum (strain DSM 19018 / LMG 30748 / EbN1) (Azoarcus sp. (strain EbN1))).